The sequence spans 142 residues: Large ribosomal subunit protein uL13 (142 aa).

This sequence belongs to the universal ribosomal protein uL13 family. In terms of assembly, part of the 50S ribosomal subunit.

This protein is one of the early assembly proteins of the 50S ribosomal subunit, although it is not seen to bind rRNA by itself. It is important during the early stages of 50S assembly. This Cellvibrio japonicus (strain Ueda107) (Pseudomonas fluorescens subsp. cellulosa) protein is Large ribosomal subunit protein uL13.